The primary structure comprises 286 residues: F-box/SPRY domain-containing protein 1 (286 aa).

Alanine 2 carries the post-translational modification N-acetylalanine. In terms of domain architecture, F-box spans 33-82 (AGAGGRLPSRVLELVFSYLELSELRSCALVCKHWYRCLHGDENSEVWRSL). The B30.2/SPRY domain occupies 92–284 (LRTDILCNLP…VTLVYLGKPL (193 aa)).

This sequence belongs to the FBXO45/Fsn family. As to quaternary structure, forms a complex with MYCBP2 and SKP1. Interacts with HEY1; leading to FBXO45 nuclear translocation. Interacts (via SPRY domain) with CDH2.

The protein localises to the secreted. Its subcellular location is the postsynaptic cell membrane. It is found in the presynaptic cell membrane. It localises to the nucleus. The protein operates within protein modification; protein ubiquitination. Its function is as follows. Component of E3 ubiquitin ligase complex consisting of FBXO45, MYCBP2 and SKP1. Functions in substrate recognition but also plays an important role in assembly of the complex. Required for normal neuromuscular synaptogenesis, axon pathfinding and neuronal migration. Regulates neuron migration during brain development through interaction with N-cadherin/CDH2 after secretion via a non-classical mechanism. Plays a role in the regulation of neurotransmission at mature neurons. May control synaptic activity by controlling UNC13A via ubiquitin dependent pathway. Specifically recognizes TP73, promoting its ubiquitination and degradation. Polyubiquitinates NMNAT2, an adenylyltransferase that acts as an axon maintenance factor, and regulates its stability and degradation by the proteasome. Also acts by ubiquitinating FBXW7 during prolonged mitotic arrest and promotes FBXW7 proteasomal degradation. Induces subsequently an increase in mitotic slippage and prevents mitotic cell death. In response to influenza infection, mediates interferon-lambda receptor IFNLR1 polyubiquitination and degradation through the ubiquitin-proteasome system by docking with its intracellular receptor domain. In Homo sapiens (Human), this protein is F-box/SPRY domain-containing protein 1 (FBXO45).